Here is a 60-residue protein sequence, read N- to C-terminus: MKYFVVLVVLALILAIAVGPSDAVFIDILDKMENAIHKAAQAGIGIAKPIENMILPKLTK.

The signal sequence occupies residues Met1–Ala23.

The protein belongs to the andropin family. As to expression, ejaculatory duct of adult males.

Its subcellular location is the secreted. Male-specific peptide with moderate activity against Gram-positive bacteria. This is Andropin (Anp) from Drosophila simulans (Fruit fly).